A 1046-amino-acid chain; its full sequence is Inner tegument protein (1046 aa).

The interval 543–1046 (WGIVPPDESN…TGRRANGDNA (504 aa)) is interaction with large tegument protein.

Belongs to the herpesviridae inner tegument protein family. Interacts (via C-terminus) with the large tegument protein/LTP (via N-terminus).

The protein resides in the virion tegument. It is found in the host cytoplasm. The protein localises to the host nucleus. Its subcellular location is the host Golgi apparatus. It localises to the host trans-Golgi network. In terms of biological role, plays an essential role in cytoplasmic secondary envelopment during viral egress. Interacts with the capsid via the large tegument protein/LTP and participates in its transport to the host trans-Golgi network (TGN) where secondary envelopment occurs. Modulates tegumentation and capsid accumulation at the viral assembly complex. In Gallid herpesvirus 2 (strain Chicken/Md5/ATCC VR-987) (GaHV-2), this protein is Inner tegument protein (MDV050).